Reading from the N-terminus, the 547-residue chain is Chaperonin GroEL (547 aa).

ATP-binding positions include 29–32 (TLGP), 86–90 (DGTTT), G413, 479–481 (NAA), and D495.

It belongs to the chaperonin (HSP60) family. In terms of assembly, forms a cylinder of 14 subunits composed of two heptameric rings stacked back-to-back. Interacts with the co-chaperonin GroES.

It localises to the cytoplasm. It carries out the reaction ATP + H2O + a folded polypeptide = ADP + phosphate + an unfolded polypeptide.. Its function is as follows. Together with its co-chaperonin GroES, plays an essential role in assisting protein folding. The GroEL-GroES system forms a nano-cage that allows encapsulation of the non-native substrate proteins and provides a physical environment optimized to promote and accelerate protein folding. This Synechococcus sp. (strain RCC307) protein is Chaperonin GroEL.